A 477-amino-acid chain; its full sequence is Inner membrane protein YbhI (477 aa).

The Cytoplasmic segment spans residues Met1–Ser5. A helical membrane pass occupies residues Leu6–Ala26. Residue Gly27 is a topological domain, periplasmic. A helical membrane pass occupies residues Leu28 to Ile48. The Cytoplasmic segment spans residues Lys49–Pro50. Residues Phe51 to Leu71 traverse the membrane as a helical segment. The Periplasmic segment spans residues Ser72–Ser87. The chain crosses the membrane as a helical span at residues Gly88–Leu108. The Cytoplasmic portion of the chain corresponds to Gly109 to Arg148. Residues Ala149–Glu169 form a helical membrane-spanning segment. Residues Lys170 to Gly219 lie on the Periplasmic side of the membrane. The chain crosses the membrane as a helical span at residues Gly220 to Ile240. Topologically, residues Tyr241–Lys272 are cytoplasmic. The helical transmembrane segment at Met273–Val293 threads the bilayer. Topologically, residues Asp294–Thr297 are periplasmic. Residues Val298–Val318 traverse the membrane as a helical segment. Topologically, residues Lys319 to Asn356 are cytoplasmic. The chain crosses the membrane as a helical span at residues Leu357–Val377. Arg378 is a topological domain (periplasmic). Residues Tyr379 to Ala399 form a helical membrane-spanning segment. Over Asn400 to Trp445 the chain is Cytoplasmic. Residues Trp446–Trp466 traverse the membrane as a helical segment. The Periplasmic portion of the chain corresponds to Trp467–Leu477.

Belongs to the SLC13A/DASS transporter (TC 2.A.47) family. DIT1 subfamily.

The protein localises to the cell inner membrane. The sequence is that of Inner membrane protein YbhI (ybhI) from Escherichia coli (strain K12).